A 274-amino-acid polypeptide reads, in one-letter code: 2,3,4,5-tetrahydropyridine-2,6-dicarboxylate N-succinyltransferase (274 aa).

It belongs to the transferase hexapeptide repeat family.

It is found in the cytoplasm. It carries out the reaction (S)-2,3,4,5-tetrahydrodipicolinate + succinyl-CoA + H2O = (S)-2-succinylamino-6-oxoheptanedioate + CoA. It participates in amino-acid biosynthesis; L-lysine biosynthesis via DAP pathway; LL-2,6-diaminopimelate from (S)-tetrahydrodipicolinate (succinylase route): step 1/3. This is 2,3,4,5-tetrahydropyridine-2,6-dicarboxylate N-succinyltransferase from Salmonella agona (strain SL483).